A 144-amino-acid polypeptide reads, in one-letter code: Translation initiation factor 5A (144 aa).

K38 is modified (hypusine).

It belongs to the eIF-5A family.

Its subcellular location is the cytoplasm. Functionally, functions by promoting the formation of the first peptide bond. The protein is Translation initiation factor 5A of Nanoarchaeum equitans (strain Kin4-M).